We begin with the raw amino-acid sequence, 485 residues long: Proline--tRNA ligase (485 aa).

This sequence belongs to the class-II aminoacyl-tRNA synthetase family. ProS type 3 subfamily. As to quaternary structure, homodimer.

Its subcellular location is the cytoplasm. It catalyses the reaction tRNA(Pro) + L-proline + ATP = L-prolyl-tRNA(Pro) + AMP + diphosphate. Catalyzes the attachment of proline to tRNA(Pro) in a two-step reaction: proline is first activated by ATP to form Pro-AMP and then transferred to the acceptor end of tRNA(Pro). The chain is Proline--tRNA ligase from Methanopyrus kandleri (strain AV19 / DSM 6324 / JCM 9639 / NBRC 100938).